Consider the following 160-residue polypeptide: Cytochrome b6-f complex subunit 4 (160 aa).

Helical transmembrane passes span 36 to 56, 95 to 115, and 131 to 151; these read LLYI…GLAI, LLGV…PFLE, and TVFL…TLPI.

Belongs to the cytochrome b family. PetD subfamily. The 4 large subunits of the cytochrome b6-f complex are cytochrome b6, subunit IV (17 kDa polypeptide, petD), cytochrome f and the Rieske protein, while the 4 small subunits are petG, petL, petM and petN. The complex functions as a dimer.

The protein localises to the plastid. It is found in the chloroplast thylakoid membrane. Functionally, component of the cytochrome b6-f complex, which mediates electron transfer between photosystem II (PSII) and photosystem I (PSI), cyclic electron flow around PSI, and state transitions. The protein is Cytochrome b6-f complex subunit 4 of Oenothera elata subsp. hookeri (Hooker's evening primrose).